The following is a 596-amino-acid chain: Proteasome-associated ATPase (596 aa).

The stretch at 12–94 (SRWERETQDL…KEEIDRLAQP (83 aa)) forms a coiled coil. Residue 280-285 (GCGKTL) coordinates ATP. A docks into pockets in the proteasome alpha-ring region spans residues 595-596 (YL).

This sequence belongs to the AAA ATPase family. As to quaternary structure, homohexamer. Assembles into a hexameric ring structure that caps the 20S proteasome core. Strongly interacts with the prokaryotic ubiquitin-like protein Pup through a hydrophobic interface; the interacting region of ARC lies in its N-terminal coiled-coil domain. There is one Pup binding site per ARC hexamer ring. Upon ATP-binding, the C-terminus of ARC interacts with the alpha-rings of the proteasome core, possibly by binding to the intersubunit pockets.

It functions in the pathway protein degradation; proteasomal Pup-dependent pathway. Its function is as follows. ATPase which is responsible for recognizing, binding, unfolding and translocation of pupylated proteins into the bacterial 20S proteasome core particle. May be essential for opening the gate of the 20S proteasome via an interaction with its C-terminus, thereby allowing substrate entry and access to the site of proteolysis. Thus, the C-termini of the proteasomal ATPase may function like a 'key in a lock' to induce gate opening and therefore regulate proteolysis. The protein is Proteasome-associated ATPase of Stackebrandtia nassauensis (strain DSM 44728 / CIP 108903 / NRRL B-16338 / NBRC 102104 / LLR-40K-21).